Reading from the N-terminus, the 228-residue chain is UPF0502 protein AZOSEA09860 (228 aa).

The protein belongs to the UPF0502 family.

The sequence is that of UPF0502 protein AZOSEA09860 from Aromatoleum aromaticum (strain DSM 19018 / LMG 30748 / EbN1) (Azoarcus sp. (strain EbN1)).